Consider the following 39-residue polypeptide: Adipokinetic prohormone type 2 (39 aa).

Gln-1 carries the pyrrolidone carboxylic acid modification. A Tryptophan amide modification is found at Trp-8.

This sequence belongs to the AKH/HRTH/RPCH family. Adipokinetic hormone precursor-related peptide (APRP) can form three type of disulfide-bond dimers: p1 (alpha-alpha), p2 (alpha-beta), and p3 (beta-beta).

It localises to the secreted. Its function is as follows. This hormone, released from cells in the corpora cardiaca, causes release of diglycerides from the fat body and stimulation of muscles to use these diglycerides as an energy source during energy-demanding processes. The sequence is that of Adipokinetic prohormone type 2 from Schistocerca gregaria (Desert locust).